We begin with the raw amino-acid sequence, 117 residues long: UPF0122 protein TTE1463 (117 aa).

This sequence belongs to the UPF0122 family.

Might take part in the signal recognition particle (SRP) pathway. This is inferred from the conservation of its genetic proximity to ftsY/ffh. May be a regulatory protein. The protein is UPF0122 protein TTE1463 of Caldanaerobacter subterraneus subsp. tengcongensis (strain DSM 15242 / JCM 11007 / NBRC 100824 / MB4) (Thermoanaerobacter tengcongensis).